Reading from the N-terminus, the 224-residue chain is Phosphoribosylformylglycinamidine synthase subunit PurQ (224 aa).

One can recognise a Glutamine amidotransferase type-1 domain in the interval 1–224 (MIAIIKFPGT…ILLRRLGEWA (224 aa)). Catalysis depends on cysteine 84, which acts as the Nucleophile. Residues histidine 196 and glutamate 198 contribute to the active site.

As to quaternary structure, part of the FGAM synthase complex composed of 1 PurL, 1 PurQ and 2 PurS subunits.

Its subcellular location is the cytoplasm. The enzyme catalyses N(2)-formyl-N(1)-(5-phospho-beta-D-ribosyl)glycinamide + L-glutamine + ATP + H2O = 2-formamido-N(1)-(5-O-phospho-beta-D-ribosyl)acetamidine + L-glutamate + ADP + phosphate + H(+). It catalyses the reaction L-glutamine + H2O = L-glutamate + NH4(+). Its pathway is purine metabolism; IMP biosynthesis via de novo pathway; 5-amino-1-(5-phospho-D-ribosyl)imidazole from N(2)-formyl-N(1)-(5-phospho-D-ribosyl)glycinamide: step 1/2. Its function is as follows. Part of the phosphoribosylformylglycinamidine synthase complex involved in the purines biosynthetic pathway. Catalyzes the ATP-dependent conversion of formylglycinamide ribonucleotide (FGAR) and glutamine to yield formylglycinamidine ribonucleotide (FGAM) and glutamate. The FGAM synthase complex is composed of three subunits. PurQ produces an ammonia molecule by converting glutamine to glutamate. PurL transfers the ammonia molecule to FGAR to form FGAM in an ATP-dependent manner. PurS interacts with PurQ and PurL and is thought to assist in the transfer of the ammonia molecule from PurQ to PurL. The polypeptide is Phosphoribosylformylglycinamidine synthase subunit PurQ (Saccharolobus solfataricus (strain ATCC 35092 / DSM 1617 / JCM 11322 / P2) (Sulfolobus solfataricus)).